Reading from the N-terminus, the 824-residue chain is U-box domain-containing protein 24 (824 aa).

In terms of domain architecture, U-box spans Gly-13 to Lys-92. ARM repeat units follow at residues Ala-133–Glu-172, Asp-175–Gly-214, Pro-217–Arg-258, Asp-260–Leu-299, Ala-300–Ser-339, Glu-341–Ala-385, Asp-396–Gly-435, Val-441–Val-481, and Leu-486–Ala-525.

As to quaternary structure, interacts with BZR1, BZR2, BZR3 and GSK2. Auto-ubiquitinated. In terms of processing, phosphorylated by GSK2. Phosphorylation of PUB24 increases its cellular stability.

It localises to the cytoplasm. It is found in the cytosol. Its subcellular location is the nucleus. The catalysed reaction is S-ubiquitinyl-[E2 ubiquitin-conjugating enzyme]-L-cysteine + [acceptor protein]-L-lysine = [E2 ubiquitin-conjugating enzyme]-L-cysteine + N(6)-ubiquitinyl-[acceptor protein]-L-lysine.. It functions in the pathway protein modification; protein ubiquitination. Functionally, E3 ubiquitin-protein ligase that functions as a negative regulator of brassinosteroid (BR) signaling. Targets BZR1, a positive regulator of BR signaling pathway, and promotes its degradation via the ubiquitin-26S proteasome pathway. This chain is U-box domain-containing protein 24, found in Oryza sativa subsp. japonica (Rice).